Consider the following 345-residue polypeptide: 4-hydroxy-2-oxovalerate aldolase 1 (345 aa).

The Pyruvate carboxyltransferase domain maps to I9–A261. R17 to D18 contacts substrate. D18 lines the Mn(2+) pocket. The active-site Proton acceptor is H21. Residues S171 and H200 each contribute to the substrate site. H200 and H202 together coordinate Mn(2+). Position 291 (Y291) interacts with substrate.

It belongs to the 4-hydroxy-2-oxovalerate aldolase family.

The enzyme catalyses (S)-4-hydroxy-2-oxopentanoate = acetaldehyde + pyruvate. The protein is 4-hydroxy-2-oxovalerate aldolase 1 of Nocardia farcinica (strain IFM 10152).